The following is a 222-amino-acid chain: Small ribosomal subunit protein uS3 (222 aa).

Residues 39-109 (IRNFVKKKVY…NILINIVEVK (71 aa)) form the KH type-2 domain.

Belongs to the universal ribosomal protein uS3 family. Part of the 30S ribosomal subunit. Forms a tight complex with proteins S10 and S14.

Functionally, binds the lower part of the 30S subunit head. Binds mRNA in the 70S ribosome, positioning it for translation. The polypeptide is Small ribosomal subunit protein uS3 (Clostridium tetani (strain Massachusetts / E88)).